Here is a 65-residue protein sequence, read N- to C-terminus: Large ribosomal subunit protein bL35 (65 aa).

A disordered region spans residues 1–29; it reads MPKMKTHSGAKKRFKLTGSGKVKRQQANR.

It belongs to the bacterial ribosomal protein bL35 family.

The chain is Large ribosomal subunit protein bL35 from Kocuria rhizophila (strain ATCC 9341 / DSM 348 / NBRC 103217 / DC2201).